The sequence spans 377 residues: uncharacterized protein (377 aa).

The tract at residues 345 to 377 (VGPSPPAYEQVARSSPTDIPLPPPSCPTNVQRD) is disordered.

This is an uncharacterized protein from Schizosaccharomyces pombe (strain 972 / ATCC 24843) (Fission yeast).